The primary structure comprises 188 residues: uncharacterized protein (188 aa).

The disordered stretch occupies residues 121–142 (ADTLSRKNKRSSDQKRNGQHFE). A compositionally biased stretch (basic and acidic residues) spans 130–142 (RSSDQKRNGQHFE).

Belongs to the chlamydial CPn_0422/CT_273/TC_0545 family.

This is an uncharacterized protein from Chlamydia trachomatis serovar D (strain ATCC VR-885 / DSM 19411 / UW-3/Cx).